The sequence spans 293 residues: Chorion protein S36 (293 aa).

Residues 1–20 (MQLGLWFGLFAVAAAPLVSA) form the signal peptide. A compositionally biased stretch (polar residues) spans 235-253 (QSYGQPQAYNQPQAYSQPQ). Positions 235-293 (QSYGQPQAYNQPQAYSQPQSYGNSGSSGAGNSGPSSDSYAAGAETPLYASPAPYGSPSY) are disordered.

It belongs to the chorion protein S36 family.

It localises to the secreted. Chorion membrane (egg shell) protein; protects the egg from the environment. The sequence is that of Chorion protein S36 (Cp36) from Drosophila virilis (Fruit fly).